Here is a 180-residue protein sequence, read N- to C-terminus: Shikimate kinase (180 aa).

14–19 (GAGKSS) provides a ligand contact to ATP. Ser-18 contributes to the Mg(2+) binding site. Positions 36, 60, and 82 each coordinate substrate. Arg-120 contacts ATP. A substrate-binding site is contributed by Arg-139.

This sequence belongs to the shikimate kinase family. In terms of assembly, monomer. The cofactor is Mg(2+).

It localises to the cytoplasm. The enzyme catalyses shikimate + ATP = 3-phosphoshikimate + ADP + H(+). It participates in metabolic intermediate biosynthesis; chorismate biosynthesis; chorismate from D-erythrose 4-phosphate and phosphoenolpyruvate: step 5/7. Its function is as follows. Catalyzes the specific phosphorylation of the 3-hydroxyl group of shikimic acid using ATP as a cosubstrate. The polypeptide is Shikimate kinase (Xylella fastidiosa (strain M23)).